The sequence spans 296 residues: Enoyl-CoA hydratase AFT3-1 (296 aa).

The Peroxisomal targeting signal type 1 motif lies at 294-296 (PKL).

It belongs to the enoyl-CoA hydratase/isomerase family.

Its subcellular location is the peroxisome. The enzyme catalyses a (3S)-3-hydroxyacyl-CoA = a (2E)-enoyl-CoA + H2O. The catalysed reaction is a 4-saturated-(3S)-3-hydroxyacyl-CoA = a (3E)-enoyl-CoA + H2O. It participates in mycotoxin biosynthesis. Its function is as follows. Enoyl-CoA hydratase; part of the gene clusters that mediate the biosynthesis of the host-selective toxins (HSTs) AF-toxins responsible for Alternaria black spot of strawberry disease by the strawberry pathotype. AF-toxin I and III are valine derivatives of 2,3-dyhydroxy-isovaleric acid and 2-hydroxy-isovaleric acid respectively, while AF II is an isoleucine derivative of 2-hydroxy-valeric acid. These derivatives are bound to a 9,10-epoxy-8-hydroxy-9-methyl-decatrienoic acid (EDA) moiety. On cellular level, AF-toxins affect plasma membrane of susceptible cells and cause a sudden increase in loss of K(+) after a few minutes of toxin treatment. The aldo-keto reductase AFTS1 catalyzes the conversion of 2-keto-isovaleric acid (2-KIV) to 2-hydroxy-isovaleric acid (2-HIV) by reduction of its ketone to an alcohol. The acyl-CoA ligase AFT1, the hydrolase AFT2 and the enoyl-CoA hydratases AFT3 and AFT6, but also the polyketide synthase AFT9, the acyl-CoA dehydrogenase AFT10, the cytochrome P450 monooxygenase AFT11 and the oxidoreductase AFT12 are all involved in the biosynthesis of the AK-, AF- and ACT-toxin common EDA structural moiety. The exact function of each enzyme, and of additional enzymes identified within the AF-toxin clusters have still to be determined. This chain is Enoyl-CoA hydratase AFT3-1 (AFT3-1), found in Alternaria alternata (Alternaria rot fungus).